The chain runs to 535 residues: INSYN2B protein (535 aa).

3 disordered regions span residues 23–85 (LVKQ…SFPR), 215–346 (EARE…RSSS), and 360–387 (KLPS…PRQE). A compositionally biased stretch (polar residues) spans 46 to 59 (KNPTGVTEVNTQTP). Residues 219–232 (SALSPESSAEESNS) are compositionally biased toward low complexity. Polar residues-rich tracts occupy residues 258 to 269 (CSNTNSSASNMP), 307 to 319 (RTHS…SRSQ), and 361 to 375 (LPSQ…TGVG). A coiled-coil region spans residues 411-448 (DLQGRLQSVEESLHSNQEKIKVLLNVIQDLEKAHALTE). Residues 493 to 528 (LEEAEPTEEAPSPPKSPAEAPVPEKQDLRRKSKKVK) are disordered.

The protein belongs to the INSYN2 family.

This is INSYN2B protein (Insyn2b) from Mus musculus (Mouse).